Consider the following 31-residue polypeptide: Photosystem I reaction center subunit XII (31 aa).

The chain crosses the membrane as a helical span at residues 7 to 26 (QVFLALIIALIPGILADRLG).

This sequence belongs to the PsaM family.

It is found in the plastid. The protein localises to the chloroplast thylakoid membrane. The protein is Photosystem I reaction center subunit XII of Euglena deses.